The following is a 200-amino-acid chain: Serotonin N-acetyltransferase 2, chloroplastic (200 aa).

A chloroplast-targeting transit peptide spans 1–41; the sequence is MQMQAARPRVGVRPRGGIRPFPLPTLSFNNNSNRSACACAC. Residues 55–195 form the N-acetyltransferase domain; the sequence is FAVRRSSTGL…MAFYRSRQQI (141 aa).

The protein resides in the cytoplasm. It is found in the plastid. It localises to the chloroplast. It carries out the reaction serotonin + acetyl-CoA = N-acetylserotonin + CoA + H(+). The enzyme catalyses tyramine + acetyl-CoA = N-acetyltyramine + CoA + H(+). The catalysed reaction is tryptamine + acetyl-CoA = N-acetyltryptamine + CoA + H(+). It catalyses the reaction 5-methoxytryptamine + acetyl-CoA = melatonin + CoA + H(+). The protein operates within aromatic compound metabolism; melatonin biosynthesis; melatonin from serotonin: step 1/2. Functionally, catalyzes the N-acetylation of serotonin into N-acetylserotonin, the penultimate step in the synthesis of melatonin. Catalyzes in vitro the N-acetylation of tryptamine to produce N-acetyltryptamine, 5-methoxytryptamine to produce melatonin and tyramine to produce N-acetyltyramine. This chain is Serotonin N-acetyltransferase 2, chloroplastic, found in Oryza sativa subsp. japonica (Rice).